The following is a 101-amino-acid chain: Long chronological lifespan protein 1 (101 aa).

The signal sequence occupies residues 1–17 (MKNAALCEALPLLATCS). S81 is lipidated: GPI-anchor amidated serine. Positions 82–101 (FAKPSFSFFFFLLTSLLSPF) are cleaved as a propeptide — removed in mature form.

It is found in the cell membrane. The polypeptide is Long chronological lifespan protein 1 (LCL1) (Saccharomyces cerevisiae (strain ATCC 204508 / S288c) (Baker's yeast)).